Here is a 233-residue protein sequence, read N- to C-terminus: H-2 class II histocompatibility antigen, A-F alpha chain (233 aa).

An alpha-1 region spans residues 1–88; sequence EDDIEADHVG…KRSNFTPATN (88 aa). The Extracellular segment spans residues 1–195; the sequence is EDDIEADHVG…IPAPMSELTE (195 aa). An alpha-2 region spans residues 89-182; sequence EAPQATVFPK…GLEEPVLKHW (94 aa). The 93-residue stretch at 91-183 folds into the Ig-like C1-type domain; the sequence is PQATVFPKSP…LEEPVLKHWE (93 aa). A disulfide bridge connects residues Cys111 and Cys167. An N-linked (GlcNAc...) asparagine glycan is attached at Asn122. The interval 183-195 is connecting peptide; sequence EPEIPAPMSELTE. The chain crosses the membrane as a helical span at residues 196–221; that stretch reads TVVCALGLSVGLVGIVVGTIFIIQGL. The Cytoplasmic portion of the chain corresponds to 222–233; it reads RSGGTSRHPGPL.

This sequence belongs to the MHC class II family.

Its subcellular location is the membrane. The sequence is that of H-2 class II histocompatibility antigen, A-F alpha chain (H2-Aa) from Mus musculus (Mouse).